Here is a 176-residue protein sequence, read N- to C-terminus: Corrinoid adenosyltransferase (176 aa).

ATP contacts are provided by residues 6–14 (TRTGDNGTT), Lys-24, 131–136 (RRLERI), and Asn-155.

The protein belongs to the Cob(I)alamin adenosyltransferase family.

The protein resides in the cytoplasm. It carries out the reaction 2 cob(II)yrinate a,c diamide + reduced [electron-transfer flavoprotein] + 2 ATP = 2 adenosylcob(III)yrinate a,c-diamide + 2 triphosphate + oxidized [electron-transfer flavoprotein] + 3 H(+). The catalysed reaction is 2 cob(II)alamin + reduced [electron-transfer flavoprotein] + 2 ATP = 2 adenosylcob(III)alamin + 2 triphosphate + oxidized [electron-transfer flavoprotein] + 3 H(+). It functions in the pathway cofactor biosynthesis; adenosylcobalamin biosynthesis; adenosylcobalamin from cob(II)yrinate a,c-diamide: step 2/7. The chain is Corrinoid adenosyltransferase from Citrobacter freundii.